The chain runs to 361 residues: Carbamoyl phosphate synthase small chain (361 aa).

The tract at residues 1–173 (MRAALALEDG…SVREEYRFSD (173 aa)) is CPSase. L-glutamine-binding residues include serine 45, glycine 225, and glycine 227. The region spanning 177-361 (EIVVIDCGVK…DEFLAMCREH (185 aa)) is the Glutamine amidotransferase type-1 domain. Cysteine 252 (nucleophile) is an active-site residue. L-glutamine contacts are provided by leucine 253, glutamine 256, asparagine 294, glycine 296, and phenylalanine 297. Residues histidine 337 and glutamate 339 contribute to the active site.

It belongs to the CarA family. In terms of assembly, composed of two chains; the small (or glutamine) chain promotes the hydrolysis of glutamine to ammonia, which is used by the large (or ammonia) chain to synthesize carbamoyl phosphate. Tetramer of heterodimers (alpha,beta)4.

It catalyses the reaction hydrogencarbonate + L-glutamine + 2 ATP + H2O = carbamoyl phosphate + L-glutamate + 2 ADP + phosphate + 2 H(+). It carries out the reaction L-glutamine + H2O = L-glutamate + NH4(+). The protein operates within amino-acid biosynthesis; L-arginine biosynthesis; carbamoyl phosphate from bicarbonate: step 1/1. Its pathway is pyrimidine metabolism; UMP biosynthesis via de novo pathway; (S)-dihydroorotate from bicarbonate: step 1/3. Small subunit of the glutamine-dependent carbamoyl phosphate synthetase (CPSase). CPSase catalyzes the formation of carbamoyl phosphate from the ammonia moiety of glutamine, carbonate, and phosphate donated by ATP, constituting the first step of 2 biosynthetic pathways, one leading to arginine and/or urea and the other to pyrimidine nucleotides. The small subunit (glutamine amidotransferase) binds and cleaves glutamine to supply the large subunit with the substrate ammonia. This is Carbamoyl phosphate synthase small chain from Methanopyrus kandleri (strain AV19 / DSM 6324 / JCM 9639 / NBRC 100938).